The primary structure comprises 520 residues: RING-type E3 ubiquitin-protein ligase PPIL2 (520 aa).

Residues 35–108 form the U-box domain; it reads RRLPFDHCSL…GKYHCPVLFT (74 aa). Residues 197 to 217 are a coiled coil; the sequence is LKNTNAETRETLQELYKEFKG. Residue lysine 216 forms a Glycyl lysine isopeptide (Lys-Gly) (interchain with G-Cter in SUMO2) linkage. Positions 278-433 constitute a PPIase cyclophilin-type domain; it reads KKGYVRLHTN…EEIRIDATTV (156 aa). The tract at residues 456–520 is disordered; sequence APETKVKSSQ…SRGFGDFSSW (65 aa). The segment covering 463 to 474 has biased composition (low complexity); sequence SSQPQAGSQGPQ. Position 470 is a phosphoserine (serine 470). Residue lysine 482 is modified to N6-acetyllysine.

This sequence belongs to the cyclophilin-type PPIase family. PPIL2 subfamily. Component of the minor spliceosome, which splices U12-type introns. Within this complex, interacts with PRPF8/PRP8, EFTUD2/SNU114 and PLRG1. Interacts with isoform 2 of BSG. Interacts (via the PPIase cyclophilin-type domain) with CRNKL1; they may form a trimeric complex with HSP90. As to expression, highest expression in thymus, pancreas and testis. Also detected in heart, placenta, lung, liver, skeletal muscle, kidney, spleen, prostate, ovary, small intestine and colon. Poorly detected in brain and leukocytes. Strong protein expression in lymph node (cortical, paracortical and medullar regions), thyroid (follicular epithelial cells), testis (developing spermatozoa), stomach (cells lining the gastric pit), pancreas, kidney (proximal and distal-tubule cells and collecting duct cells but not in glomeruli), endometrium and colon (goblet cells). Moderate protein expression in spleen, prostate (epithelium and squamous cell carcinomas), placenta and adrenal gland. Weak protein expression in liver, heart, breast, ovary, and lung. No protein expression in brain and bladder. High protein expression in most lymphomas and melanomas.

The protein localises to the nucleus. The catalysed reaction is S-ubiquitinyl-[E2 ubiquitin-conjugating enzyme]-L-cysteine + [acceptor protein]-L-lysine = [E2 ubiquitin-conjugating enzyme]-L-cysteine + N(6)-ubiquitinyl-[acceptor protein]-L-lysine.. Its pathway is protein modification; protein ubiquitination. Its function is as follows. Has a ubiquitin-protein ligase activity acting as an E3 ubiquitin protein ligase or as an ubiquitin-ubiquitin ligase promoting elongation of ubiquitin chains on substrates. By mediating 'Lys-48'-linked polyubiquitination of proteins could target them for proteasomal degradation. May also function as a chaperone, playing a role in transport to the cell membrane of BSG/Basigin for instance. Probable inactive PPIase with no peptidyl-prolyl cis-trans isomerase activity. As a component of the minor spliceosome, involved in the splicing of U12-type introns in pre-mRNAs. The polypeptide is RING-type E3 ubiquitin-protein ligase PPIL2 (Homo sapiens (Human)).